The sequence spans 447 residues: Na(+)-translocating NADH-quinone reductase subunit A (447 aa).

It belongs to the NqrA family. Composed of six subunits; NqrA, NqrB, NqrC, NqrD, NqrE and NqrF.

The catalysed reaction is a ubiquinone + n Na(+)(in) + NADH + H(+) = a ubiquinol + n Na(+)(out) + NAD(+). Functionally, NQR complex catalyzes the reduction of ubiquinone-1 to ubiquinol by two successive reactions, coupled with the transport of Na(+) ions from the cytoplasm to the periplasm. NqrA to NqrE are probably involved in the second step, the conversion of ubisemiquinone to ubiquinol. This Neisseria gonorrhoeae (strain ATCC 700825 / FA 1090) protein is Na(+)-translocating NADH-quinone reductase subunit A.